The sequence spans 3801 residues: Lysosomal-trafficking regulator (3801 aa).

A disordered region spans residues 148–173 (KITHRYSVRDARKTQLSTSDSEANSD). Position 164 is a phosphoserine (serine 164). Threonine 165 carries the post-translational modification Phosphothreonine. A Phosphoserine modification is found at serine 166. Residues 662–700 (ELSSSLSSPSYRFQGILPSSGSEDLLWKWDALKAYQNFV) form a WD 1 repeat. The span at 1181–1190 (AMTEKSHQSA) shows a compositional bias: basic and acidic residues. 2 disordered regions span residues 1181 to 1203 (AMTE…FSEE) and 1221 to 1256 (YEAD…SPND). Positions 1221–1238 (YEADSESNPEDGETQDDG) are enriched in acidic residues. Residues 1246–1256 (EGFSASSSPND) show a composition bias toward polar residues. Phosphoserine is present on residues serine 1509 and serine 1510. A WD 2 repeat occupies 1582–1626 (SQENIFLPSKWQHLVLTYLQQPQGKRRIHGKISIWVSGQRKPDVT). Residues serine 2105, serine 2124, serine 2213, serine 2217, and serine 2264 each carry the phosphoserine modification. The span at 2205 to 2215 (KQLGAEPRSED) shows a compositional bias: basic and acidic residues. The interval 2205 to 2224 (KQLGAEPRSEDDSPGDESCP) is disordered. The 107-residue stretch at 3009–3115 (AASESIRVNR…VRDDVYHNIL (107 aa)) folds into the BEACH-type PH domain. The region spanning 3120–3422 (PNLLEYGNIT…QLFHMAHVSR (303 aa)) is the BEACH domain. WD repeat units follow at residues 3563 to 3602 (SQQY…STPS), 3614 to 3653 (GHTE…YVQS), 3656 to 3699 (GHKS…VGHV), 3700 to 3744 (HCRE…PVRE), and 3749 to 3788 (KSNK…RLKQ).

As to quaternary structure, interacts with CPAP, LIP8 and ZNF521. In terms of tissue distribution, abundantly expressed in adult and fetal thymus, peripheral blood leukocytes, bone marrow and several regions of the adult brain.

Its subcellular location is the cytoplasm. In terms of biological role, adapter protein that regulates and/or fission of intracellular vesicles such as lysosomes. Might regulate trafficking of effectors involved in exocytosis. In cytotoxic T-cells and natural killer (NK) cells, has role in the regulation of size, number and exocytosis of lytic granules. In macrophages and dendritic cells, regulates phagosome maturation by controlling the conversion of early phagosomal compartments into late phagosomes. In macrophages and dendritic cells, specifically involved in TLR3- and TLR4-induced production of pro-inflammatory cytokines by regulating the endosomal TLR3- TICAM1/TRIF and TLR4- TICAM1/TRIF signaling pathways. The polypeptide is Lysosomal-trafficking regulator (LYST) (Homo sapiens (Human)).